The following is a 325-amino-acid chain: uncharacterized protein (325 aa).

The segment at methionine 1–threonine 32 is disordered. Residues glutamate 23–threonine 32 are compositionally biased toward low complexity. Residues alanine 135–leucine 223 adopt a coiled-coil conformation.

Its subcellular location is the cytoplasm. It is found in the cytoskeleton. The protein resides in the microtubule organizing center. It localises to the spindle pole body. This is an uncharacterized protein from Schizosaccharomyces pombe (strain 972 / ATCC 24843) (Fission yeast).